The chain runs to 2161 residues: Voltage-dependent L-type calcium channel subunit alpha-1D (2161 aa).

3 disordered regions span residues 1 to 21 (MMMMMMMKKMQHQRQQQADHA), 30 to 49 (TRLPLSGEGPTSQPNSSKQT), and 64 to 100 (KAAQTMSTSAPPPVGSLSQRKRQQYAKSKKQGNSSNS). Residues 1–126 (MMMMMMMKKM…RACISIVEWK (126 aa)) are Cytoplasmic-facing. The span at 38 to 49 (GPTSQPNSSKQT) shows a compositional bias: polar residues. Positions 82-93 (QRKRQQYAKSKK) are enriched in basic residues. The I repeat unit spans residues 113–409 (NPIRRACISI…LVLGVLSGEF (297 aa)). A helical transmembrane segment spans residues 127 to 145 (PFDIFILLAIFANCVALAI). The Extracellular portion of the chain corresponds to 146–163 (YIPFPEDDSNSTNHNLEK). An N-linked (GlcNAc...) asparagine glycan is attached at Asn-155. A helical membrane pass occupies residues 164 to 183 (VEYAFLIIFTVETFLKIIAY). Topologically, residues 184 to 195 (GLLLHPNAYVRN) are cytoplasmic. Residues 196 to 214 (GWNLLDFVIVIVGLFSVIL) form a helical membrane-spanning segment. Residues 215–235 (EQLTKETEGGNHSSGKSGGFD) lie on the Extracellular side of the membrane. N-linked (GlcNAc...) asparagine glycosylation is present at Asn-225. The helical transmembrane segment at 236-254 (VKALRAFRVLRPLRLVSGV) threads the bilayer. At 255–273 (PSLQVVLNSIIKAMVPLLH) the chain is on the cytoplasmic side. A helical membrane pass occupies residues 274-293 (IALLVLFVIIIYAIIGLELF). The Extracellular portion of the chain corresponds to 294 to 381 (IGKMHKTCFF…WMNDAMGFEL (88 aa)). A glycan (N-linked (GlcNAc...) asparagine) is linked at Asn-329. Position 364 (Glu-364) interacts with Ca(2+). A helical membrane pass occupies residues 382-406 (PWVYFVSLVIFGSFFVLNLVLGVLS). Residues 407 to 523 (GEFSKEREKA…RRCRAAVKSV (117 aa)) lie on the Cytoplasmic side of the membrane. A binding to the beta subunit region spans residues 429–446 (QQLEEDLKGYLDWITQAE). A disordered region spans residues 449 to 482 (DPENEEEGGEEGKRNTSMPTSETESVNTENVSGE). Residues 463–479 (NTSMPTSETESVNTENV) are compositionally biased toward polar residues. The II repeat unit spans residues 509–755 (NRFNRRRCRA…VFLAIAVDNL (247 aa)). The helical transmembrane segment at 524–543 (TFYWLVIVLVFLNTLTISSE) threads the bilayer. Over 544–558 (HYNQPDWLTQIQDIA) the chain is Extracellular. The helical transmembrane segment at 559–577 (NKVLLALFTCEMLVKMYSL) threads the bilayer. Over 578-585 (GLQAYFVS) the chain is Cytoplasmic. The chain crosses the membrane as a helical span at residues 586–604 (LFNRFDCFVVCGGITETIL). Residues 605–614 (VELEIMSPLG) are Extracellular-facing. A helical membrane pass occupies residues 615 to 633 (ISVFRCVRLLRIFKVTRHW). The Cytoplasmic portion of the chain corresponds to 634-652 (TSLSNLVASLLNSMKSIAS). The chain crosses the membrane as a helical span at residues 653-673 (LLLLLFLFIIIFSLLGMQLFG). At 674–727 (GKFNFDETQTKRSTFDNFPQALLTVFQILTGEDWNAVMYDGIMAYGGPSSSGMI) the chain is on the extracellular side. Position 705 (Glu-705) interacts with Ca(2+). A helical membrane pass occupies residues 728-752 (VCIYFIILFICGNYILLNVFLAIAV). Residues 753–886 (DNLADAESLN…VGCHKLINHH (134 aa)) are Cytoplasmic-facing. The segment covering 766–790 (KEEAEEKERKKIARKESLENKKNNK) has biased composition (basic and acidic residues). The interval 766-850 (KEEAEEKERK…AGPRPRRISE (85 aa)) is disordered. Positions 791 to 802 (PEVNQIANSDNK) are enriched in polar residues. The segment covering 825–838 (VGEEEEEEEEDEPE) has biased composition (acidic residues). One copy of the III repeat lies at 873-1155 (NPIRVGCHKL…IFVGFVIVTF (283 aa)). Residues 887–905 (IFTNLILVFIMLSSAALAA) form a helical membrane-spanning segment. The Extracellular segment spans residues 906 to 921 (EDPIRSHSFRNTILGY). A helical membrane pass occupies residues 922–941 (FDYAFTAIFTVEILLKMTTF). Residues 942–953 (GAFLHKGAFCRN) are Cytoplasmic-facing. Residues 954 to 972 (YFNLLDMLVVGVSLVSFGI) form a helical membrane-spanning segment. Residues 973–978 (QSSAIS) lie on the Extracellular side of the membrane. Residues 979–998 (VVKILRVLRVLRPLRAINRA) traverse the membrane as a helical segment. The Cytoplasmic segment spans residues 999–1017 (KGLKHVVQCVFVAIRTIGN). Residues 1018–1037 (IMIVTTLLQFMFACIGVQLF) traverse the membrane as a helical segment. Residues 1038–1127 (KGKFYRCTDE…IGPIYNHRVE (90 aa)) are Extracellular-facing. Residues 1075–1165 (RIWQNSDFNF…QEQGEKEYKN (91 aa)) form a dihydropyridine binding region. Glu-1101 serves as a coordination point for Ca(2+). Residues 1128–1148 (ISIFFIIYIIIVAFFMMNIFV) form a helical membrane-spanning segment. The Cytoplasmic segment spans residues 1149–1205 (GFVIVTFQEQGEKEYKNCELDKNQRQCVEYALKARPLRRYIPKNPYQYKFWYVVNSS). The stretch at 1192–1467 (NPYQYKFWYV…LFVAVIMDNF (276 aa)) is one IV repeat. A helical membrane pass occupies residues 1206–1224 (PFEYMMFVLIMLNTLCLAM). The Extracellular segment spans residues 1225–1239 (QHYEQSKMFNDAMDI). A helical transmembrane segment spans residues 1240 to 1259 (LNMVFTGVFTVEMVLKVIAF). Over 1260-1266 (KPKGYFS) the chain is Cytoplasmic. The helical transmembrane segment at 1267–1288 (DAWNTFDSLIVIGSIIDVALSE) threads the bilayer. Residues 1289-1313 (ADPTESENVPVPTATPGNSEESNRI) lie on the Extracellular side of the membrane. Residues 1314–1333 (SITFFRLFRVMRLVKLLSRG) form a helical membrane-spanning segment. The Cytoplasmic portion of the chain corresponds to 1334 to 1352 (EGIRTLLWTFIKSFQALPY). A helical membrane pass occupies residues 1353 to 1372 (VALLIAMLFFIYAVIGMQMF). The Extracellular segment spans residues 1373-1439 (GKVAMRDNNQ…GEEYTCGSNF (67 aa)). Positions 1420–1486 (LCDPESDYNP…LGPHHLDEFK (67 aa)) are dihydropyridine binding. The segment at 1432–1475 (EYTCGSNFAIVYFISFYMLCAFLIINLFVAVIMDNFDYLTRDWS) is phenylalkylamine binding. A helical membrane pass occupies residues 1440–1464 (AIVYFISFYMLCAFLIINLFVAVIM). Residues 1465 to 2161 (DNFDYLTRDW…ADEMICITTL (697 aa)) are Cytoplasmic-facing. 4 disordered regions span residues 1659–1678 (SCDLQDDEPEETKREEEDDV), 1684–1804 (ALLG…VKRT), 1872–1919 (PGRN…ASHR), and 2108–2152 (NGNV…EDLA). Positions 1745–1763 (SIGKQVPTSTNANLNNANM) are enriched in polar residues. Positions 1779-1797 (HVSENGHHSSHKHDREPQR) are enriched in basic and acidic residues. Residues 2138-2152 (SDEEPDPGRDEEDLA) show a composition bias toward acidic residues.

Belongs to the calcium channel alpha-1 subunit (TC 1.A.1.11) family. CACNA1D subfamily. In terms of assembly, voltage-dependent calcium channels are multisubunit complexes, consisting of alpha-1, alpha-2, beta and delta subunits in a 1:1:1:1 ratio. The channel activity is directed by the pore-forming and voltage-sensitive alpha-1 subunit. In many cases, this subunit is sufficient to generate voltage-sensitive calcium channel activity. The auxiliary subunits beta and alpha-2/delta linked by a disulfide bridge regulate the channel activity. Channel activity is further modulated, depending on the presence of specific delta subunit isoforms. Interacts (via IQ domain) with CABP1 and CABP4 in a calcium independent manner. Interacts with RIMBP2. Expressed in pancreatic islets and in brain, where it has been seen in cerebral cortex, hippocampus, basal ganglia, habenula and thalamus. Expressed in the small cell lung carcinoma cell line SCC-9. No expression in skeletal muscle.

It is found in the membrane. The catalysed reaction is Ca(2+)(in) = Ca(2+)(out). Functionally, voltage-sensitive calcium channels (VSCC) mediate the entry of calcium ions into excitable cells and are also involved in a variety of calcium-dependent processes, including muscle contraction, hormone or neurotransmitter release, gene expression, cell motility, cell division and cell death. The isoform alpha-1D gives rise to L-type calcium currents. Long-lasting (L-type) calcium channels belong to the 'high-voltage activated' (HVA) group. They are blocked by dihydropyridines (DHP), phenylalkylamines, and by benzothiazepines. In terms of biological role, voltage-sensitive calcium channels (VSCC) mediate the entry of calcium ions into excitable cells and are also involved in a variety of calcium-dependent processes, including muscle contraction, hormone or neurotransmitter release, gene expression, cell motility, cell division and cell death. The isoform alpha-1D gives rise to L-type calcium currents. The polypeptide is Voltage-dependent L-type calcium channel subunit alpha-1D (CACNA1D) (Homo sapiens (Human)).